The primary structure comprises 118 residues: MVKMTKSKTFQAYLPHCHRTYSCIHCRAHLANHDELISKSFQGSQGRAYLFNSVVNVGCGPAEERVLLTGLHAVADIYCENCKTTLGWKYEHAFESSQKYKEGKFIIELAHMIKDNGW.

The 98-residue stretch at Arg-19–Asn-116 folds into the Yippee domain. The Zn(2+) site is built by Cys-23, Cys-26, Cys-79, and Cys-82. Residues Lys-99 to Lys-104 carry the Nuclear localization signal motif.

It belongs to the yippee family.

The protein resides in the nucleus. In terms of biological role, may play a role in epithelioid conversion of fibroblasts. This Mus musculus (Mouse) protein is Protein yippee-like 1 (Ypel1).